The chain runs to 44 residues: Large ribosomal subunit protein bL34 (44 aa).

Belongs to the bacterial ribosomal protein bL34 family.

The protein is Large ribosomal subunit protein bL34 of Ehrlichia ruminantium (strain Gardel).